The following is a 744-amino-acid chain: Catalase-peroxidase (744 aa).

An N-terminal signal peptide occupies residues 1 to 22 (MSPRARRCTDRCARMSERSMNA). Positions 114 to 234 (WHSAGTYRLA…LGATEMGLIY (121 aa)) form a cross-link, tryptophyl-tyrosyl-methioninium (Trp-Tyr) (with M-260). H115 serves as the catalytic Proton acceptor. A cross-link (tryptophyl-tyrosyl-methioninium (Tyr-Met) (with W-114)) is located at residues 234-260 (YVNPEGPDRNGDPISAAKFIRETFARM). H275 contacts heme b.

It belongs to the peroxidase family. Peroxidase/catalase subfamily. Homodimer or homotetramer. Heme b serves as cofactor. In terms of processing, formation of the three residue Trp-Tyr-Met cross-link is important for the catalase, but not the peroxidase activity of the enzyme.

The enzyme catalyses H2O2 + AH2 = A + 2 H2O. It catalyses the reaction 2 H2O2 = O2 + 2 H2O. Its function is as follows. Bifunctional enzyme with both catalase and broad-spectrum peroxidase activity. This is Catalase-peroxidase from Azorhizobium caulinodans (strain ATCC 43989 / DSM 5975 / JCM 20966 / LMG 6465 / NBRC 14845 / NCIMB 13405 / ORS 571).